The primary structure comprises 85 residues: Putative membrane protein insertion efficiency factor (85 aa).

It belongs to the UPF0161 family.

The protein resides in the cell inner membrane. Could be involved in insertion of integral membrane proteins into the membrane. The chain is Putative membrane protein insertion efficiency factor from Tolumonas auensis (strain DSM 9187 / NBRC 110442 / TA 4).